The following is a 137-amino-acid chain: DNA-directed RNA polymerase I subunit RPA14 (137 aa).

The segment at 100–137 is disordered; sequence PPAQDFSAAPIQVSTTEKKETSIGVSATGGKKTTFADE. At S121 the chain carries Phosphoserine.

As to quaternary structure, component of the RNA polymerase I (Pol I) complex consisting of 14 subunits: RPA135, RPA190, RPC40, RPA14, RPB5, RPO26, RPA43, RPB8, RPA12, RPB10, RPC19, RPC10, RPA49 and RPA34. The complex is composed of a horseshoe-shaped core containing ten subunits (RPA135, RPA190, RPB5, RPO26, RPB8, RPB10, RPC10, RPA12, RPC19 and RPC40) where RPA135 and RPA190 form the DNA-binding cleft. Outside of the core, RPA14 and RPA43 form the stalk that mediates interactions with transcription initiation factors and newly synthesized RNA. Post-translationally, the N-terminus is blocked.

Its subcellular location is the nucleus. The protein localises to the nucleolus. In terms of biological role, DNA-dependent RNA polymerases catalyze the transcription of DNA into RNA using the four ribonucleoside triphosphates as substrates. Component of RNA polymerase I (Pol I) which synthesizes ribosomal RNA precursors. RPA14 seems to play a role in the stability of subunits RPO26 and RPA43. In vitro, the RPA14-RPA43 subcomplex binds single-stranded RNA. In Saccharomyces cerevisiae (strain ATCC 204508 / S288c) (Baker's yeast), this protein is DNA-directed RNA polymerase I subunit RPA14 (RPA14).